A 272-amino-acid chain; its full sequence is Dermonecrotic toxin LvSicTox-alphaIC1aiii (272 aa).

His4 is a catalytic residue. Glu24 and Asp26 together coordinate Mg(2+). Catalysis depends on His40, which acts as the Nucleophile. 2 cysteine pairs are disulfide-bonded: Cys44/Cys50 and Cys46/Cys189. Asp84 provides a ligand contact to Mg(2+).

Belongs to the arthropod phospholipase D family. Class II subfamily. It depends on Mg(2+) as a cofactor. Expressed by the venom gland.

It localises to the secreted. It carries out the reaction an N-(acyl)-sphingosylphosphocholine = an N-(acyl)-sphingosyl-1,3-cyclic phosphate + choline. The enzyme catalyses an N-(acyl)-sphingosylphosphoethanolamine = an N-(acyl)-sphingosyl-1,3-cyclic phosphate + ethanolamine. The catalysed reaction is a 1-acyl-sn-glycero-3-phosphocholine = a 1-acyl-sn-glycero-2,3-cyclic phosphate + choline. It catalyses the reaction a 1-acyl-sn-glycero-3-phosphoethanolamine = a 1-acyl-sn-glycero-2,3-cyclic phosphate + ethanolamine. Functionally, dermonecrotic toxins cleave the phosphodiester linkage between the phosphate and headgroup of certain phospholipids (sphingolipid and lysolipid substrates), forming an alcohol (often choline) and a cyclic phosphate. This toxin acts on sphingomyelin (SM). It may also act on ceramide phosphoethanolamine (CPE), lysophosphatidylcholine (LPC) and lysophosphatidylethanolamine (LPE), but not on lysophosphatidylserine (LPS), and lysophosphatidylglycerol (LPG). It acts by transphosphatidylation, releasing exclusively cyclic phosphate products as second products. Induces dermonecrosis, hemolysis, increased vascular permeability, edema, inflammatory response, and platelet aggregation. The protein is Dermonecrotic toxin LvSicTox-alphaIC1aiii of Loxosceles variegata (Recluse spider).